The primary structure comprises 1639 residues: Mediator of RNA polymerase II transcription subunit 14 (1639 aa).

The LXXLL motif 1 motif lies at 49 to 53 (LAELL). Disordered regions lie at residues 561–586 (GQSP…GSDS) and 709–755 (LPQP…KTVH). Over residues 575–586 (SAAGGPAPGSDS) the composition is skewed to low complexity. The span at 711–721 (QPKPPQAPPTP) shows a compositional bias: pro residues. Residues 722–748 (QQQQQQQQQQQQPGTSDAKSSGAGASA) are compositionally biased toward low complexity. Residues 768–772 (LKRLL) carry the LXXLL motif 2 motif. Disordered regions lie at residues 1039-1243 (RRSQ…HHYT) and 1558-1639 (MQPG…GGPN). 2 stretches are compositionally biased toward gly residues: residues 1062 to 1088 (GNNG…GTGM) and 1122 to 1142 (IGGG…GQGG). Residues 1189–1201 (GPSSLSYMQSHTD) show a composition bias toward polar residues. Residues 1219–1229 (PGMPRPSPRPG) show a composition bias toward pro residues. Over residues 1558 to 1579 (MQPGGGPGVPGGPGGPMGGQIG) the composition is skewed to gly residues. Positions 1589-1603 (VGSSPSPMMHSPMQQ) are enriched in low complexity. A compositionally biased stretch (gly residues) spans 1604–1639 (MGGGGPQPGAYGGMVGGPGGGPQSGGPVGGGPGGPN).

The protein belongs to the Mediator complex subunit 14 family. Component of the Mediator complex.

It localises to the nucleus. Functionally, component of the Mediator complex, a coactivator involved in the regulated transcription of nearly all RNA polymerase II-dependent genes. Mediator functions as a bridge to convey information from gene-specific regulatory proteins to the basal RNA polymerase II transcription machinery. Mediator is recruited to promoters by direct interactions with regulatory proteins and serves as a scaffold for the assembly of a functional preinitiation complex with RNA polymerase II and the general transcription factors. The protein is Mediator of RNA polymerase II transcription subunit 14 (MED14) of Anopheles gambiae (African malaria mosquito).